A 242-amino-acid chain; its full sequence is Biosynthetic peptidoglycan transglycosylase (242 aa).

Residues 19-39 (LMVVLAVFWGGGIALFSVAPV) traverse the membrane as a helical segment.

This sequence belongs to the glycosyltransferase 51 family.

It localises to the cell inner membrane. It carries out the reaction [GlcNAc-(1-&gt;4)-Mur2Ac(oyl-L-Ala-gamma-D-Glu-L-Lys-D-Ala-D-Ala)](n)-di-trans,octa-cis-undecaprenyl diphosphate + beta-D-GlcNAc-(1-&gt;4)-Mur2Ac(oyl-L-Ala-gamma-D-Glu-L-Lys-D-Ala-D-Ala)-di-trans,octa-cis-undecaprenyl diphosphate = [GlcNAc-(1-&gt;4)-Mur2Ac(oyl-L-Ala-gamma-D-Glu-L-Lys-D-Ala-D-Ala)](n+1)-di-trans,octa-cis-undecaprenyl diphosphate + di-trans,octa-cis-undecaprenyl diphosphate + H(+). It participates in cell wall biogenesis; peptidoglycan biosynthesis. Functionally, peptidoglycan polymerase that catalyzes glycan chain elongation from lipid-linked precursors. The sequence is that of Biosynthetic peptidoglycan transglycosylase from Escherichia coli O157:H7.